Reading from the N-terminus, the 1026-residue chain is Multidrug resistance protein MdtC (1026 aa).

11 helical membrane-spanning segments follow: residues 15 to 35 (ILIA…LPVA), 333 to 353 (EVEE…FLFL), 360 to 380 (LIPA…MYLC), 387 to 407 (LSLM…IVVL), 431 to 451 (VGFT…PLLL), 463 to 483 (FAVT…TLTP), 528 to 548 (LVGV…IAIP), 853 to 873 (LILI…LYES), 897 to 917 (LFNA…IGIV), 953 to 973 (PIMM…LSGG), and 984 to 1004 (ITIV…TPVV).

Belongs to the resistance-nodulation-cell division (RND) (TC 2.A.6) family. MdtC subfamily. As to quaternary structure, part of a tripartite efflux system composed of MdtA, MdtB and MdtC. MdtC forms a heteromultimer with MdtB.

The protein localises to the cell inner membrane. The protein is Multidrug resistance protein MdtC of Salmonella enteritidis PT4 (strain P125109).